The primary structure comprises 425 residues: Histidinol dehydrogenase (425 aa).

NAD(+)-binding residues include Y124, Q184, and N207. Residues S230, Q252, and H255 each contribute to the substrate site. Positions 252 and 255 each coordinate Zn(2+). Active-site proton acceptor residues include E321 and H322. Substrate contacts are provided by H322, D355, E409, and H414. Zn(2+) is bound at residue D355. Position 414 (H414) interacts with Zn(2+).

It belongs to the histidinol dehydrogenase family. Zn(2+) serves as cofactor.

The catalysed reaction is L-histidinol + 2 NAD(+) + H2O = L-histidine + 2 NADH + 3 H(+). It functions in the pathway amino-acid biosynthesis; L-histidine biosynthesis; L-histidine from 5-phospho-alpha-D-ribose 1-diphosphate: step 9/9. Its function is as follows. Catalyzes the sequential NAD-dependent oxidations of L-histidinol to L-histidinaldehyde and then to L-histidine. This Halobacterium salinarum (strain ATCC 700922 / JCM 11081 / NRC-1) (Halobacterium halobium) protein is Histidinol dehydrogenase.